The following is a 598-amino-acid chain: Arylsulfate sulfotransferase AssT (598 aa).

The N-terminal stretch at 1–27 (MFDKYRKTLVAGTVAITLGLSASGVMA) is a signal peptide. H279 and H383 together coordinate 4-methylumbelliferone. A disulfide bond links C445 and C451. A 4-methylumbelliferone-binding site is contributed by H463. Catalysis depends on H463, which acts as the Nucleophile; sulfurylated histidine covalent intermediate.

This sequence belongs to the aryl sulfotransferase family. In terms of assembly, homodimer. Post-translationally, the disulfide bond is crucial for enzyme activity.

It localises to the periplasm. The enzyme catalyses an aryl sulfate + a phenol = an aryl sulfate + a phenol. It catalyses the reaction 4-methylumbelliferone sulfate + phenol = phenyl sulfate + 4-methylumbelliferone. Functionally, catalyzes the transfer of a sulfate group from a phenyl sulfate ester to other phenolic compounds. In vitro, is able to use 4-methylumbelliferyl sulfate and p-nitrophenyl sulfate (PNS) as donor substrates with phenol as the acceptor substrate. Cannot use 3'-phosphoadenosine-5'-phophosulfate (PAPS), the donor substrate of mammalian sulfotransferase. In Escherichia coli O6:H1 (strain CFT073 / ATCC 700928 / UPEC), this protein is Arylsulfate sulfotransferase AssT.